Reading from the N-terminus, the 318-residue chain is Receptor homology region, transmembrane domain- and RING domain-containing protein 5 (318 aa).

Residues 1–20 (MNYSWITIMSLLVICKLASA) form the signal peptide. Topologically, residues 22 to 163 (VVLIGKNTIL…IPGFGISSWS (142 aa)) are lumenal. A disulfide bond links Cys62 and Cys87. In terms of domain architecture, PA spans 70 to 143 (EKRSKYRSSY…RASGEVLKGY (74 aa)). Asn121 carries N-linked (GlcNAc...) asparagine glycosylation. The chain crosses the membrane as a helical span at residues 164-184 (IMGITFISLLAMSAILATCFV). The Cytoplasmic segment spans residues 185–318 (VRRHQIRQSV…DLPIVVRVYL (134 aa)). The segment at 233–275 (CAICIDDYCVGEKLRILPCKHKYHAVCIDSWLGRCRSFCPVCK) adopts an RING-type; atypical zinc-finger fold.

The protein resides in the prevacuolar compartment membrane. The protein localises to the protein storage vacuole membrane. Functionally, involved in the trafficking of vacuolar proteins. May function as a sorting receptor for protein trafficking to the protein storage vacuole (PSV). This is Receptor homology region, transmembrane domain- and RING domain-containing protein 5 (RMR5) from Arabidopsis thaliana (Mouse-ear cress).